Here is a 902-residue protein sequence, read N- to C-terminus: DNA mismatch repair protein MutS (902 aa).

647 to 654 (GPNMGGKS) provides a ligand contact to ATP.

It belongs to the DNA mismatch repair MutS family.

Functionally, this protein is involved in the repair of mismatches in DNA. It is possible that it carries out the mismatch recognition step. This protein has a weak ATPase activity. This chain is DNA mismatch repair protein MutS, found in Nitrosospira multiformis (strain ATCC 25196 / NCIMB 11849 / C 71).